The following is a 414-amino-acid chain: DNA primase small subunit PriS (414 aa).

Catalysis depends on residues Asp98, Asp100, and Asp312.

It belongs to the eukaryotic-type primase small subunit family. As to quaternary structure, heterodimer of a small subunit (PriS) and a large subunit (PriL). Mg(2+) is required as a cofactor. The cofactor is Mn(2+).

Its function is as follows. Catalytic subunit of DNA primase, an RNA polymerase that catalyzes the synthesis of short RNA molecules used as primers for DNA polymerase during DNA replication. The small subunit contains the primase catalytic core and has DNA synthesis activity on its own. Binding to the large subunit stabilizes and modulates the activity, increasing the rate of DNA synthesis while decreasing the length of the DNA fragments, and conferring RNA synthesis capability. The DNA polymerase activity may enable DNA primase to also catalyze primer extension after primer synthesis. May also play a role in DNA repair. This is DNA primase small subunit PriS from Methanosarcina mazei (strain ATCC BAA-159 / DSM 3647 / Goe1 / Go1 / JCM 11833 / OCM 88) (Methanosarcina frisia).